Reading from the N-terminus, the 351-residue chain is Ubiquinol oxidase 4, chloroplastic/chromoplastic (351 aa).

The transit peptide at 1 to 56 (MAAISGISSGTLTISRPLVTLRRSRAAVSYSSSHRLLHHLPLSSRRLLLRNNHRVQ) directs the protein to the chloroplast and chromoplast. The disordered stretch occupies residues 71–91 (ESFKAETSTGTEPLEEPNMSS). A helical transmembrane segment spans residues 132–152 (FFVLETIARVPYFAFMSVLHM). The Fe cation site is built by Glu-136, Glu-175, and His-178. The chain crosses the membrane as a helical span at residues 195–215 (FLAQHIATFYYFMTVFLYILS). Fe cation is bound by residues Glu-227, Glu-296, and His-299.

This sequence belongs to the alternative oxidase family. It depends on Fe cation as a cofactor. Ubiquitous.

Its subcellular location is the plastid. It is found in the chloroplast thylakoid membrane. The protein resides in the chromoplast membrane. The catalysed reaction is 2 a ubiquinol + O2 = 2 a ubiquinone + 2 H2O. In terms of biological role, acts early in chloroplast biogenesis as a component of a redox chain responsible for phytoene desaturation. Prevents the generation of toxic oxygen radicals and photooxidation of the nascent photosynthetic apparatus. Involved in the differentiation of multiple plastid types, including chloroplasts, amyloplasts, and etioplasts. Might participate in the chloroplast respiratory chain. The chain is Ubiquinol oxidase 4, chloroplastic/chromoplastic (AOX4) from Arabidopsis thaliana (Mouse-ear cress).